A 205-amino-acid chain; its full sequence is Snake venom metalloproteinase BmooMPalpha-I (205 aa).

The Peptidase M12B domain maps to 8-204 (RYIELVVVAD…HNPQCILNEP (197 aa)). 2 residues coordinate Ca(2+): Glu11 and Asp95. 3 cysteine pairs are disulfide-bonded: Cys119-Cys199, Cys159-Cys183, and Cys161-Cys166. His144 provides a ligand contact to Zn(2+). Glu145 is an active-site residue. Positions 148 and 154 each coordinate Zn(2+). Ca(2+) contacts are provided by Cys199 and Asn202.

Belongs to the venom metalloproteinase (M12B) family. P-I subfamily. Monomer. Zn(2+) is required as a cofactor. In terms of tissue distribution, expressed by the venom gland.

The protein resides in the secreted. Its activity is regulated as follows. Inhibited by EDTA. Not inhibited by the serine proteinase inhibitors aprotinin and benzamidine. In terms of biological role, snake venom zinc metalloproteinase that cleaves the alpha chain of fibrinogen (FGA) first followed by the beta chain (FGB) and shows no effect on the gamma chain. Cleaves only the beta chain of fibrin, leaving the gamma-dimer untouched. Shows proteolytic activity towards azocasein. Causes defibrinogenation when intraperitoneally administered on mice. In Bothrops moojeni (Lance-headed viper), this protein is Snake venom metalloproteinase BmooMPalpha-I.